We begin with the raw amino-acid sequence, 89 residues long: MNITLILFLIGILGFVLNRKNIILMLISIEIMLLAITFLILVSSLNMDDIIGQTYAIYIIVVAGAESAIGLGILVAFYRLRGSIAIEYK.

3 helical membrane passes run Met1 to Asn21, Ile22 to Val42, and Ile57 to Phe77.

This sequence belongs to the complex I subunit 4L family.

The protein resides in the mitochondrion membrane. The enzyme catalyses a ubiquinone + NADH + 5 H(+)(in) = a ubiquinol + NAD(+) + 4 H(+)(out). Its function is as follows. Core subunit of the mitochondrial membrane respiratory chain NADH dehydrogenase (Complex I) that is believed to belong to the minimal assembly required for catalysis. Complex I functions in the transfer of electrons from NADH to the respiratory chain. The immediate electron acceptor for the enzyme is believed to be ubiquinone. This Podospora anserina (strain S / ATCC MYA-4624 / DSM 980 / FGSC 10383) (Pleurage anserina) protein is NADH-ubiquinone oxidoreductase chain 4L (ND4L).